The chain runs to 606 residues: MPYEIKKVFASLPQVERGVSKIVGGDPKGNSFLYTNGKCVILRNIDNPAIADIYTEHAHQVVVAKYAPSGFYIASGDVSGKLRIWDTTQKEHLLKYEYQPFAGKIKDIAWTEDSKRIAVVGEGREKFGAVFLWDSGSSVGEITGHNKVINSVDIKQSRPYRLVTGSDDNCAAFFEGPPFKFKFTISDHGRFVNCVRFSPDGNRFATASADGQIFIYDGKTGEKVCALGGSKAHDGGIYAISWSPDSTHLLSASGDKTSKIWDVNVNSVVNTFTMGSNVLDQQLGCLWQKDHLLSISLSGYINYLDKNNPSKPLRVIKGHSKSIQCLTVHKNGGKSYIYSGSHDGHINYWDSETGENDSFAGKGHTNQVSRMTVDEHGQLVSCSMDDTVRYTNLTLRDYSGQGVVKLDVQPKCLAVGPGGYTVVVCIGQIVLLKDQRKCFSIDNPGYEPEVVAVHPGGETVAVGGADGNVRLYSILGTTLKDEGKLLEAKGPVTDLAFSHDGAFLAVCDASKVVTVFSVADGYSENNVFYGHHAKIVCLAWSPDNEHFASGGMDMMVYVWTLSDPETRVKIQDAHRLHHVSSLAWLDEHTLVTTSHDASVKEWTIAY.

13 WD repeats span residues 4 to 45 (EIKK…LRNI), 48 to 87 (PAIA…IWDT), 93 to 135 (LLKY…LWDS), 138 to 176 (SVGE…FFEG), 180 to 218 (KFKF…IYDG), 224 to 263 (VCAL…IWDV), 270 to 306 (NTFT…YLDK), 311 to 351 (KPLR…YWDS), 358 to 408 (SFAG…KLDV), 432 to 474 (LKDQ…LYSI), 480 to 518 (KDEG…VFSV), 523 to 561 (SENN…VWTL), and 566 to 604 (TRVK…EWTI). Lys-28, Lys-81, Lys-95, and Lys-115 each carry N6-acetyllysine. Tyr-238 bears the Phosphotyrosine mark. Lys-480 is modified (N6-acetyllysine).

This sequence belongs to the WD repeat AIP1 family.

The protein resides in the cytoplasm. The protein localises to the cytoskeleton. Its subcellular location is the cell projection. It localises to the podosome. Its function is as follows. Induces disassembly of actin filaments in conjunction with ADF/cofilin family proteins. Enhances cofilin-mediated actin severing. Involved in cytokinesis. Involved in chemotactic cell migration by restricting lamellipodial membrane protrusions. Involved in myocardium sarcomere organization. Required for cardiomyocyte growth and maintenance. Involved in megakaryocyte maturation and platelet shedding. Required for the establishment of planar cell polarity (PCP) during follicular epithelium development and for cell shape changes during PCP; the function seems to implicate cooperation with CFL1 and/or DSTN/ADF. Involved in the generation/maintenance of cortical tension. Involved in assembly and maintenance of epithelial apical cell junctions and plays a role in the organization of the perijunctional actomyosin belt. This is WD repeat-containing protein 1 (WDR1) from Bos taurus (Bovine).